We begin with the raw amino-acid sequence, 446 residues long: Probable D-serine dehydratase (446 aa).

The residue at position 116 (Lys116) is an N6-(pyridoxal phosphate)lysine.

It belongs to the serine/threonine dehydratase family. DsdA subfamily. The cofactor is pyridoxal 5'-phosphate.

It catalyses the reaction D-serine = pyruvate + NH4(+). The sequence is that of Probable D-serine dehydratase from Bacillus anthracis (strain CDC 684 / NRRL 3495).